We begin with the raw amino-acid sequence, 428 residues long: Gamma-glutamyl phosphate reductase (428 aa).

Belongs to the gamma-glutamyl phosphate reductase family.

Its subcellular location is the cytoplasm. It catalyses the reaction L-glutamate 5-semialdehyde + phosphate + NADP(+) = L-glutamyl 5-phosphate + NADPH + H(+). The protein operates within amino-acid biosynthesis; L-proline biosynthesis; L-glutamate 5-semialdehyde from L-glutamate: step 2/2. Its function is as follows. Catalyzes the NADPH-dependent reduction of L-glutamate 5-phosphate into L-glutamate 5-semialdehyde and phosphate. The product spontaneously undergoes cyclization to form 1-pyrroline-5-carboxylate. This Chromohalobacter salexigens (strain ATCC BAA-138 / DSM 3043 / CIP 106854 / NCIMB 13768 / 1H11) protein is Gamma-glutamyl phosphate reductase.